The sequence spans 300 residues: Matrix protein (300 aa).

The interval 1 to 36 (MHMFPLGVVEDSDPPGPPIGRASGSPPPGAGRSTAK) is disordered.

Homodimer. Dimerization is critical for virion formation. Interacts with host ANP32B.

The protein resides in the virion. It is found in the host cell membrane. In terms of biological role, the M protein has a crucial role in virus assembly and interacts with the RNP complex as well as with the viral membrane. Associates with phosphatidylserine (PS) and phosphatidylinositol 4,5-bisphosphate (PIP2) at the plasma membrane. Interaction with PIP2 triggers matrix protein lattice polymerization. Matrix proteins induce host membrane deformation and curvature necessary for virion assembly/budding. In Measles virus (strain Yamagata-1) (MeV), this protein is Matrix protein (M).